A 138-amino-acid polypeptide reads, in one-letter code: Nanos homolog 2 (138 aa).

Residues E31 to A55 form a disordered region. A Nanos-type zinc finger spans residues L62–L116. Zn(2+) contacts are provided by C63, C66, H79, C90, C98, C101, H109, and C114. Short sequence motifs (C2HC) lie at residues C63–C90 and C98–C114.

The protein belongs to the nanos family. As to quaternary structure, interacts with CNOT1, CNOT3, CNOT6L, CNOT7 and CNOT9. As to expression, testis and ovary. Expression found in several spermatogenic stages: in cells on the periphery of the tubules which could correspond to spermatogonia, in spermatocytes and in round spermatids (at protein level).

It localises to the cytoplasm. The protein resides in the P-body. Its subcellular location is the perinuclear region. In terms of biological role, plays a key role in the sexual differentiation of germ cells by promoting the male fate but suppressing the female fate. Represses the female fate pathways by suppressing meiosis, which in turn results in the promotion of the male fate. Maintains the suppression of meiosis by preventing STRA8 expression, which is required for premeiotic DNA replication, after CYP26B1 is decreased. Regulates the localization of the CCR4-NOT deadenylation complex to P-bodies and plays a role in recruiting the complex to trigger the degradation of mRNAs involved in meiosis. Required for the maintenance of the spermatogonial stem cell population. Not essential for the assembly of P-bodies but is required for the maintenance of their normal state. The polypeptide is Nanos homolog 2 (NANOS2) (Homo sapiens (Human)).